A 396-amino-acid polypeptide reads, in one-letter code: dTDP-epi-vancosaminyltransferase (396 aa).

Residue 10 to 12 coordinates dTDP-beta-L-4-epi-vancosamine; the sequence is SRG. D127, Q133, Y141, and Y169 together coordinate devancoaminyl-vancomycin. Residues R207, S230, 277–278, and 293–298 each bind dTDP-beta-L-4-epi-vancosamine; these read EV and HDSAGT.

This sequence belongs to the glycosyltransferase 28 family.

It catalyses the reaction dTDP-beta-L-4-epi-vancosamine + devancoaminyl-vancomycin = chloroorienticin B + dTDP + H(+). Its pathway is antibiotic biosynthesis; vancomycin biosynthesis. Its function is as follows. Catalyzes the attachment of 4-epi-vancosamine from a TDP donor to the beta-OH-Tyr-6 of the aglycone cosubstrate in the biosynthesis of glycopeptide antibiotic chloroeremomycin, a member of the vancomycin group of antibiotics. Strongly prefers devancoaminyl-vancomycin (DVV) as substrate rather than the heptapeptide vancomycin aglycone (AGV). Acts downstream of GtfB. The sequence is that of dTDP-epi-vancosaminyltransferase (gtfA) from Amycolatopsis orientalis (Nocardia orientalis).